Reading from the N-terminus, the 332-residue chain is Putative pumilio homolog 20 (332 aa).

The 332-residue stretch at 1–332 folds into the PUM-HD domain; sequence MAHQLRFAAA…NIASILNSIR (332 aa). Pumilio repeat units follow at residues 89–124 and 125–159; these read SDPD…FAAA and ILRR…AMYE. The Pumilio 3; degenerate repeat unit spans residues 160–191; sequence HILHYASHIARDKHGNLALNDIITDAYRNKLF. 3 Pumilio repeats span residues 192–228, 229–266, and 267–303; these read DVIA…NIVV, SLRG…ELME, and CEGD…DLFW.

The protein localises to the cytoplasm. Its function is as follows. Sequence-specific RNA-binding protein that regulates translation and mRNA stability by binding the 3'-UTR of target mRNAs. This is Putative pumilio homolog 20 (APUM20) from Arabidopsis thaliana (Mouse-ear cress).